The chain runs to 433 residues: uncharacterized protein (433 aa).

It belongs to the mimivirus R160 family.

It is found in the virion. This is an uncharacterized protein from Acanthamoeba polyphaga mimivirus (APMV).